The primary structure comprises 848 residues: Trimethylamine-N-oxide reductase 1 (848 aa).

The segment at residues M1 to A39 is a signal peptide (tat-type signal). S191 contacts Mo-bis(molybdopterin guanine dinucleotide).

Belongs to the prokaryotic molybdopterin-containing oxidoreductase family. In terms of assembly, interacts with the N-terminal domain of TorC. It depends on Mo-bis(molybdopterin guanine dinucleotide) as a cofactor. Post-translationally, exported by the Tat system. The position of the signal peptide cleavage has been experimentally proven.

It localises to the periplasm. The catalysed reaction is trimethylamine + 2 Fe(III)-[cytochrome c] + H2O = trimethylamine N-oxide + 2 Fe(II)-[cytochrome c] + 3 H(+). Functionally, reduces trimethylamine-N-oxide (TMAO) into trimethylamine; an anaerobic reaction coupled to energy-yielding reactions. In Escherichia coli (strain K12), this protein is Trimethylamine-N-oxide reductase 1 (torA).